We begin with the raw amino-acid sequence, 550 residues long: Chaperonin GroEL (550 aa).

Residues 30–33 (TLGP), Lys-51, 87–91 (DGTTT), Gly-415, 481–483 (NAA), and Asp-497 contribute to the ATP site.

Belongs to the chaperonin (HSP60) family. In terms of assembly, forms a cylinder of 14 subunits composed of two heptameric rings stacked back-to-back. Interacts with the co-chaperonin GroES.

The protein resides in the cytoplasm. It catalyses the reaction ATP + H2O + a folded polypeptide = ADP + phosphate + an unfolded polypeptide.. Its function is as follows. Together with its co-chaperonin GroES, plays an essential role in assisting protein folding. The GroEL-GroES system forms a nano-cage that allows encapsulation of the non-native substrate proteins and provides a physical environment optimized to promote and accelerate protein folding. This chain is Chaperonin GroEL, found in Photobacterium profundum (strain SS9).